The primary structure comprises 1494 residues: Methyl-CpG-binding domain protein 5 (1494 aa).

An MBD domain is found at 11-81; the sequence is DKEGGLPAIQ…KVFNFDPGAA (71 aa). The segment at 57–68 is required for interaction with ASXL1/2/3; that stretch reads DGTCKCGLECPL. Disordered stretches follow at residues 123–152, 200–274, 329–350, 450–522, 594–641, 809–848, 1154–1173, and 1345–1375; these read LVLT…RNKS, RQRL…TPLS, HHKP…QKKP, IGRI…KDIP, LAGN…QSGR, PNPP…SSSI, HDGR…LDHG, and VNGC…SNEL. A compositionally biased stretch (pro residues) spans 333–343; sequence PQGPPPPPPPS. 2 stretches are compositionally biased toward low complexity: residues 499–511 and 594–612; these read SPRP…PSTK and LAGN…AGSG. Composition is skewed to polar residues over residues 614–624 and 813–835; these read TEGHSTLNTMF and QSRI…YNQT. The segment covering 836–848 has biased composition (low complexity); sequence SSEAGGSGPSSSI. A PWWP domain is found at 1385 to 1409; the sequence is VGDLVWGQIKGLTSWPGKLVREDDV. Residues 1468–1494 are disordered; sequence MSGTVHQIPQGDRQMRPPKPKRRKISR. Over residues 1483 to 1494 the composition is skewed to basic residues; it reads RPPKPKRRKISR.

In terms of assembly, core component of the polycomb repressive deubiquitinase (PR-DUB) complex, at least composed of BAP1, one of ASXL1, ASXL2 or (probably) ASXL3, and one of MBD5 or MBD6. Distinct combinations of ASXL and MBD proteins may preferentially bind specific histone modification marks. The PR-DUB core associates with a number of accessory proteins, including FOXK1, FOXK2, KDM1B, HCFC1 and OGT; KDM1B specifically associates with ASXL2 PR-DUB complexes. Interacts (via MBD domain) with ASXL1, ASXL2 and ASXL3 (via PHD domain); the interaction is probably direct, mediates association with other PR-DUB complex core components. Detected in heart, placenta, liver, skeletal muscle, kidney and pancreas.

Its subcellular location is the nucleus. The protein localises to the chromosome. In terms of biological role, non-catalytic component of the polycomb repressive deubiquitinase (PR-DUB) complex, a complex that specifically mediates deubiquitination of histone H2A monoubiquitinated at 'Lys-120' (H2AK119ub1). Important for stability of PR-DUB components and stimulating its ubiquitinase activity. As part of the PR-DUB complex, associates with chromatin enriched in histone marks H3K4me1, H3K4me3, and H3K27Ac, but not in H3K27me3. The PR-DUB complex is an epigenetic regulator of gene expression, including genes involved in cell growth and survivability. MBD5 and MBD6 containing complexes associate with distinct chromatin regions enriched in genes involved in different pathways. Heterochromatin recruitment is not mediated by DNA methylation. The PR-DUB complex is an epigenetic regulator of gene expression, including genes involved in development, cell communication, signaling, cell proliferation and cell viability. The sequence is that of Methyl-CpG-binding domain protein 5 (MBD5) from Homo sapiens (Human).